Consider the following 710-residue polypeptide: Homeobox-leucine zipper protein ROC8 (710 aa).

Residues 1 to 23 (MDFGDEPEGSDSQRRRKRYHRHT) are disordered. The span at 14–23 (RRRKRYHRHT) shows a compositional bias: basic residues. The homeobox DNA-binding region spans 15–74 (RRKRYHRHTPRQIQQLEAMFKECPHPDENQRAQLSRELGLEPRQIKFWFQNRRTQMKAQH). Positions 82 to 144 (LRAENDKIRC…DRVSNLTSKY (63 aa)) form a coiled coil. One can recognise an START domain in the interval 197-440 (SDMERPMMAE…LQRACERYAS (244 aa)). The segment covering 630-648 (RPGSAAGASTSSAGPLAAA) has biased composition (low complexity). Positions 630–650 (RPGSAAGASTSSAGPLAAARG) are disordered.

The protein belongs to the HD-ZIP homeobox family. Class IV subfamily.

Its subcellular location is the nucleus. Its function is as follows. Probable transcription factor. The chain is Homeobox-leucine zipper protein ROC8 (ROC8) from Oryza sativa subsp. japonica (Rice).